Here is a 395-residue protein sequence, read N- to C-terminus: Zinc-regulated GTPase metalloprotein activator 1B (395 aa).

A disordered region spans residues 1–36 (MLPAVGSADEEEDPAEEDCPELVPMETTQSEEEEKS). Residues 8–20 (ADEEEDPAEEDCP) show a composition bias toward acidic residues. Positions 17-24 (EDCPELVP) match the psi-PxLVp motif motif. 49–56 (GYLGAGKT) is a binding site for GTP. Positions 107, 109, and 110 each coordinate Zn(2+). The short motif at 107–110 (CLCC) is the CXCC motif element. GTP-binding positions include 110-114 (CSVKD) and 203-206 (NKTD). The CobW C-terminal domain occupies 274-377 (IVTITFEVPG…ILKQLFIATV (104 aa)).

The protein belongs to the SIMIBI class G3E GTPase family. ZNG1 subfamily.

It localises to the nucleus. It carries out the reaction GTP + H2O = GDP + phosphate + H(+). Functionally, zinc chaperone that directly transfers zinc cofactor to target metalloproteins, thereby activating them. Catalyzes zinc insertion into the active site of methionine aminopeptidase METAP1, which function to cleave the initiator methionine from polypeptides during or after protein translation. Mechanistically, the N-terminal psi-PxLVp motif binds to the C6H2-type zinc finger of inactive form of METAP1. After formation of the docked complex, zinc is transferred from the CXCC motif in the GTPase domain of ZNG1B to the zinc binding site in the peptidase domain of METAP1 in a process requiring GTP hydrolysis. GTP/GDP exchange is required for release of active METAP1. In Homo sapiens (Human), this protein is Zinc-regulated GTPase metalloprotein activator 1B.